Reading from the N-terminus, the 254-residue chain is Receptor expression-enhancing protein 2 (254 aa).

A run of 2 helical transmembrane segments spans residues 1–21 (MVSWIISRLVVLIFGTLYPAY) and 35–55 (YVKWMMYWIVFAFFTTAETLT). Phosphoserine is present on Ser152. The disordered stretch occupies residues 194-254 (LSLRSSTSQP…KKSSGGGDSA (61 aa)). Over residues 205 to 219 (PRTETSEDDLGDKAP) the composition is skewed to basic and acidic residues.

The protein belongs to the DP1 family. As to quaternary structure, interacts with odorant receptor proteins.

Its subcellular location is the membrane. Functionally, required for endoplasmic reticulum (ER) network formation, shaping and remodeling. May enhance the cell surface expression of odorant receptors. This is Receptor expression-enhancing protein 2 (Reep2) from Mus musculus (Mouse).